Here is a 146-residue protein sequence, read N- to C-terminus: Leptin (146 aa).

A disulfide bond links C96 and C146.

It belongs to the leptin family.

The protein localises to the secreted. Functionally, key player in the regulation of energy balance and body weight control. Once released into the circulation, has central and peripheral effects by binding LEPR, found in many tissues, which results in the activation of several major signaling pathways. In the hypothalamus, acts as an appetite-regulating factor that induces a decrease in food intake and an increase in energy consumption by inducing anorexinogenic factors and suppressing orexigenic neuropeptides, also regulates bone mass and secretion of hypothalamo-pituitary-adrenal hormones. In the periphery, increases basal metabolism, influences reproductive function, regulates pancreatic beta-cell function and insulin secretion, is pro-angiogenic for endothelial cell and affects innate and adaptive immunity. In the arcuate nucleus of the hypothalamus, activates by depolarization POMC neurons inducing FOS and SOCS3 expression to release anorexigenic peptides and inhibits by hyperpolarization NPY neurons inducing SOCS3 with a consequent reduction on release of orexigenic peptides. In addition to its known satiety inducing effect, has a modulatory role in nutrient absorption. In the intestine, reduces glucose absorption by enterocytes by activating PKC and leading to a sequential activation of p38, PI3K and ERK signaling pathways which exerts an inhibitory effect on glucose absorption. Acts as a growth factor on certain tissues, through the activation of different signaling pathways increases expression of genes involved in cell cycle regulation such as CCND1, via JAK2-STAT3 pathway, or VEGFA, via MAPK1/3 and PI3K-AKT1 pathways. May also play an apoptotic role via JAK2-STAT3 pathway and up-regulation of BIRC5 expression. Pro-angiogenic, has mitogenic activity on vascular endothelial cells and plays a role in matrix remodeling by regulating the expression of matrix metalloproteinases (MMPs) and tissue inhibitors of metalloproteinases (TIMPs). In innate immunity, modulates the activity and function of neutrophils by increasing chemotaxis and the secretion of oxygen radicals. Increases phagocytosis by macrophages and enhances secretion of pro-inflammatory mediators. Increases cytotoxic ability of NK cells. Plays a pro-inflammatory role, in synergy with IL1B, by inducing NOS2 which promotes the production of IL6, IL8 and Prostaglandin E2, through a signaling pathway that involves JAK2, PI3K, MAP2K1/MEK1 and MAPK14/p38. In adaptive immunity, promotes the switch of memory T-cells towards T helper-1 cell immune responses. Increases CD4(+)CD25(-) T-cell proliferation and reduces autophagy during TCR (T-cell receptor) stimulation, through MTOR signaling pathway activation and BCL2 up-regulation. This chain is Leptin (LEP), found in Ovis aries (Sheep).